The chain runs to 269 residues: Tryptophan synthase alpha chain (269 aa).

Catalysis depends on proton acceptor residues Glu-49 and Asp-60.

It belongs to the TrpA family. As to quaternary structure, tetramer of two alpha and two beta chains.

It catalyses the reaction (1S,2R)-1-C-(indol-3-yl)glycerol 3-phosphate + L-serine = D-glyceraldehyde 3-phosphate + L-tryptophan + H2O. It functions in the pathway amino-acid biosynthesis; L-tryptophan biosynthesis; L-tryptophan from chorismate: step 5/5. Functionally, the alpha subunit is responsible for the aldol cleavage of indoleglycerol phosphate to indole and glyceraldehyde 3-phosphate. The protein is Tryptophan synthase alpha chain of Ectopseudomonas mendocina (strain ymp) (Pseudomonas mendocina).